The following is a 259-amino-acid chain: UPF0246 protein NGK_0633 (259 aa).

The protein belongs to the UPF0246 family.

This is UPF0246 protein NGK_0633 from Neisseria gonorrhoeae (strain NCCP11945).